The primary structure comprises 183 residues: 2-epi-5-epi-valiolone epimerase (183 aa).

The VOC domain occupies 11 to 155; sequence AVHHVAYTVP…WGMQLELINL (145 aa). Histidine 14, glutamate 76, histidine 99, and glutamate 151 together coordinate a divalent metal cation.

Homodimer. The cofactor is a divalent metal cation.

It catalyses the reaction 2-epi-5-epi-valiolone = 5-epi-valiolone. It participates in antibiotic biosynthesis. Catalyzes the epimerization of 2-epi-5-epi-valiolone to 5-epi-valiolone. Involved in cetoniacytone A biosynthesis. The chain is 2-epi-5-epi-valiolone epimerase from Actinomyces sp.